The primary structure comprises 96 residues: MLFHVEMTVNLPSDMDAERAARLKSDEKAMSQKLQQEGVWRHLWRIAGRYANISVFDVESPAHLHDVLSQLPLFPYMDVEVRALCRHASSIHDDDR.

Belongs to the muconolactone Delta-isomerase family. Homodecamer.

It catalyses the reaction (S)-muconolactone = (4,5-dihydro-5-oxofuran-2-yl)-acetate. Its pathway is aromatic compound metabolism; beta-ketoadipate pathway; 5-oxo-4,5-dihydro-2-furylacetate from catechol: step 3/3. The sequence is that of Muconolactone Delta-isomerase 2 (catC2) from Acinetobacter lwoffii.